The following is a 457-amino-acid chain: Flavin-containing monooxygenase FMO GS-OX2 (457 aa).

17 to 22 (GAGAAG) serves as a coordination point for FAD. 211 to 216 (GNFASG) contacts NADP(+).

Belongs to the FMO family.

It carries out the reaction a (Z)-omega-(methylsulfanyl)-N-sulfo-alkylhydroximate S-glucoside + NADPH + O2 + H(+) = a (Z)-omega-(methylsulfinyl)-alkyl-glucosinolate + NADP(+) + H2O. Functionally, catalyzes the conversion of methylthioalkyl glucosinolates of any chain length into methylsulfinylalkyl glucosinolates. This is Flavin-containing monooxygenase FMO GS-OX2 (FMOGS-OX2) from Arabidopsis thaliana (Mouse-ear cress).